A 662-amino-acid chain; its full sequence is Eukaryotic peptide chain release factor GTP-binding subunit (662 aa).

The tract at residues 1–220 is disordered; it reads MASNQPNNGE…PATVTEDATD (220 aa). The segment covering 26-40 has biased composition (low complexity); sequence AKAPTFTPKAAPFIP. Over residues 62–89 the composition is skewed to polar residues; the sequence is YTGQGQNSNSPHPTKSYQQYYQKPTGNT. Positions 91-102 are enriched in basic and acidic residues; the sequence is DEDKSRVPDFSK. Positions 122–134 are enriched in polar residues; it reads GGNTSAPKSTKPI. The span at 141–158 shows a compositional bias: low complexity; the sequence is TKAPTTTKPAAPAAQSKT. A Phosphothreonine modification is found at Thr182. Residues 192 to 213 are compositionally biased toward low complexity; that stretch reads AKTPSAPAAALKKAAEAAEPAT. Residues 236 to 464 enclose the tr-type G domain; that stretch reads KEHVNIVFIG…LDSMTHLERK (229 aa). A G1 region spans residues 245–252; that stretch reads GHVDAGKS. Residue 245–252 participates in GTP binding; it reads GHVDAGKS. A G2 region spans residues 301-305; sequence GKTVE. The interval 322-325 is G3; it reads DAPG. Residues 384–387 and 428–429 contribute to the GTP site; these read NKMD and AY. Residues 384 to 387 form a G4 region; sequence NKMD. The tract at residues 427–429 is G5; sequence SAY. At Ser539 the chain carries Phosphoserine.

Belongs to the TRAFAC class translation factor GTPase superfamily. Classic translation factor GTPase family. ERF3 subfamily. In terms of assembly, component of the eRF1-eRF3-GTP ternary complex, composed of sup45/eRF1, sup35/eRF3 and GTP.

The protein localises to the cytoplasm. It catalyses the reaction GTP + H2O = GDP + phosphate + H(+). Its function is as follows. GTPase component of the eRF1-eRF3-GTP ternary complex, a ternary complex that mediates translation termination in response to the termination codons. Sup35/eRF3 mediates sup45/ERF1 delivery to stop codons: The eRF1-eRF3-GTP complex binds to a stop codon in the ribosomal A-site. GTP hydrolysis by sup35/eRF3 induces a conformational change that leads to its dissociation, permitting sup45/eRF1 to accommodate fully in the A-site. The sequence is that of Eukaryotic peptide chain release factor GTP-binding subunit (sup35) from Schizosaccharomyces pombe (strain 972 / ATCC 24843) (Fission yeast).